A 235-amino-acid polypeptide reads, in one-letter code: Small ribosomal subunit protein uS3 (235 aa).

The 69-residue stretch at 39–107 (IREFIKEECK…ELHLNIVEVR (69 aa)) folds into the KH type-2 domain. Residues 213–235 (QARDRKAQELQDGPAPRGAGGRR) are disordered.

Belongs to the universal ribosomal protein uS3 family. In terms of assembly, part of the 30S ribosomal subunit. Forms a tight complex with proteins S10 and S14.

Its function is as follows. Binds the lower part of the 30S subunit head. Binds mRNA in the 70S ribosome, positioning it for translation. The protein is Small ribosomal subunit protein uS3 of Ruegeria pomeroyi (strain ATCC 700808 / DSM 15171 / DSS-3) (Silicibacter pomeroyi).